A 185-amino-acid polypeptide reads, in one-letter code: Large ribosomal subunit protein bL25 (185 aa).

The protein belongs to the bacterial ribosomal protein bL25 family. CTC subfamily. In terms of assembly, part of the 50S ribosomal subunit; part of the 5S rRNA/L5/L18/L25 subcomplex. Contacts the 5S rRNA. Binds to the 5S rRNA independently of L5 and L18.

This is one of the proteins that binds to the 5S RNA in the ribosome where it forms part of the central protuberance. This Laribacter hongkongensis (strain HLHK9) protein is Large ribosomal subunit protein bL25.